A 433-amino-acid chain; its full sequence is Transcription factor elt-2 (433 aa).

2 disordered regions span residues 1–47 and 194–235; these read MDNN…ELPR and GQPP…RQGL. The span at 27 to 43 shows a compositional bias: polar residues; sequence PTQNMDPPEQNNESQLS. The segment covering 211–234 has biased composition (low complexity); sequence AKQSSKKSSSSNRGSNGSASRRQG. The GATA-type zinc finger occupies 237-261; that stretch reads CSNCNGTNTTLWRRNAEGDPVCNAC. Residues 275 to 332 form a disordered region; sequence SMKKEGALQTRKRKSKSGDSSTPSTSRARERKFERASSSTEKAQRSSNRRAGSAKADR. The span at 310 to 324 shows a compositional bias: polar residues; the sequence is ASSSTEKAQRSSNRR.

Interacts with lag-1. Interacts with pha-4. Interacts with rpt-6. Post-translationally, may be ubiquitinated in response to infection by B.pseudomallei. In terms of tissue distribution, expressed in the intestine.

Its subcellular location is the nucleus. Transcriptional activator that binds to the consensus sequence 5'-[AT]GATA[AG]-3'. Predominantly directs the transcription of intestinal genes such as ges-1, cpr-6, pho-1, ftn-1, vit-2 and lev-11, and itself. Required for gut-specific differentiation, specifically acting with the GATA region-binding transcription factor elt-7 to control normal gene expression and promote normal formation of the intestine. Regulates intestinal gene expression in response to hypoxia to promote longevity. Modulation of longevity may, in part, be the result of regulation of expression of daf-16 isoforms d and f in the intestine. Regulates tissue specific gene expression at basal levels and in response to bacterial infection in the intestine to control innate immunity. Plays a role in the induction of metal-responsive genes, activating gene expression from zinc-activated promoters and iron-dependent promoters and enhancers. May regulate the expression of genes that control sensitivity to oxidative stress, in a mab-3-dependent manner, and osmotic stress, in conjunction with the GATA region-binding transcription factor elt-3. May play a role in sphingolipid signaling by regulating the expression of the sphingosine-1-phosphate degrading enzyme, sphingosine-1-phosphate lyase. May act with the Notch signaling pathway to promote endodermal gene expression. Has a protective role in response to infection by Gram-negative bacteria such as S.enterica, E.coli, P.aeruginosa and B.pseudomallei, Gram-positive bacterium E.faecalis and fungal pathogen C.neoformans. An association with the 26S proteasome regulatory subunit rpt-6, in part, controls gene expression in response to infection by P.aeruginosa. Regulates gene expression during the recovery phase following a bacterial infection. May act with p38-activated transcription factors to control p38 gene induction in response to bacterial infection. Controls lysosome formation in the intestine by controlling lysosomal gene expression. The protein is Transcription factor elt-2 of Caenorhabditis elegans.